The chain runs to 296 residues: Probable AP endonuclease (296 aa).

C16 and C20 form a disulfide bridge. Residues H78, H115, E142, H182, H218, D231, H233, and E271 each contribute to the Zn(2+) site.

It belongs to the AP endonuclease 2 family. Zn(2+) serves as cofactor.

It localises to the host nucleus. It is found in the host cytoplasm. The protein resides in the virion. In terms of biological role, endonuclease of the viral base excision repair system that catalyzes DNA cleavage reaction at the apurinic or apyrimidinic sites (AP sites). Cleaves phosphodiester bonds on the 5' side of AP sites. In addition to endonuclease activity, the AP endonuclease has a proofreading 3'-5' exonuclease activity that is considerably more efficient in the elimination of a mismatch than in that of a correctly paired base. Displays 3'-phosphatase and 3'-repair diesterase activities. The single nucleotide gaps generated by the AP endonuclease are filled by the viral repair DNA polymerase X and the DNA ligase. The sequence is that of Probable AP endonuclease from Ornithodoros (relapsing fever ticks).